Consider the following 290-residue polypeptide: Bifunctional protein FolD (290 aa).

NADP(+)-binding positions include 166 to 168 (GQS), Ser191, and Ile232.

The protein belongs to the tetrahydrofolate dehydrogenase/cyclohydrolase family. In terms of assembly, homodimer.

The catalysed reaction is (6R)-5,10-methylene-5,6,7,8-tetrahydrofolate + NADP(+) = (6R)-5,10-methenyltetrahydrofolate + NADPH. The enzyme catalyses (6R)-5,10-methenyltetrahydrofolate + H2O = (6R)-10-formyltetrahydrofolate + H(+). It functions in the pathway one-carbon metabolism; tetrahydrofolate interconversion. Functionally, catalyzes the oxidation of 5,10-methylenetetrahydrofolate to 5,10-methenyltetrahydrofolate and then the hydrolysis of 5,10-methenyltetrahydrofolate to 10-formyltetrahydrofolate. This is Bifunctional protein FolD from Halorhodospira halophila (strain DSM 244 / SL1) (Ectothiorhodospira halophila (strain DSM 244 / SL1)).